A 125-amino-acid chain; its full sequence is Probable 4-amino-4-deoxy-L-arabinose-phosphoundecaprenol flippase subunit ArnF (125 aa).

The Cytoplasmic portion of the chain corresponds to 1–2; it reads MG. A helical transmembrane segment spans residues 3–23; the sequence is VMWGLISVAIASLAQLSLGFA. Topologically, residues 24–33 are periplasmic; that stretch reads MMRLPSIAHP. The helical transmembrane segment at 34–54 threads the bilayer; that stretch reads LAFISGLGAFNAATLALFAGL. At 55-76 the chain is on the cytoplasmic side; that stretch reads AGYLVSVFCWQKTLHTLALSKA. A helical membrane pass occupies residues 77–97; sequence YALLSLSYVLVWVASMLLPGL. At 98–100 the chain is on the periplasmic side; sequence QGA. The chain crosses the membrane as a helical span at residues 101 to 121; sequence FSLKAMLGVLCIMAGVMLIFL. Over 122–125 the chain is Cytoplasmic; that stretch reads PARS.

It belongs to the ArnF family. Heterodimer of ArnE and ArnF.

The protein resides in the cell inner membrane. The protein operates within bacterial outer membrane biogenesis; lipopolysaccharide biosynthesis. In terms of biological role, translocates 4-amino-4-deoxy-L-arabinose-phosphoundecaprenol (alpha-L-Ara4N-phosphoundecaprenol) from the cytoplasmic to the periplasmic side of the inner membrane. This Salmonella choleraesuis (strain SC-B67) protein is Probable 4-amino-4-deoxy-L-arabinose-phosphoundecaprenol flippase subunit ArnF.